The primary structure comprises 238 residues: Mitochondrial inner membrane protease ATP23 (238 aa).

A divalent metal cation is bound at residue His-138. Residue Glu-139 is part of the active site. His-142 serves as a coordination point for a divalent metal cation.

Belongs to the peptidase M76 family.

Its subcellular location is the mitochondrion inner membrane. Its function is as follows. Has a dual role in the assembly of mitochondrial ATPase. Acts as a protease that removes N-terminal residues of mitochondrial ATPase CF(0) subunit 6 at the intermembrane space side. Also involved in the correct assembly of the membrane-embedded ATPase CF(0) particle, probably mediating association of subunit 6 with the subunit 9 ring. The polypeptide is Mitochondrial inner membrane protease ATP23 (ATP23) (Candida albicans (strain SC5314 / ATCC MYA-2876) (Yeast)).